Here is a 93-residue protein sequence, read N- to C-terminus: SH3 domain-binding glutamic acid-rich-like protein 3 (93 aa).

At S2 the chain carries N-acetylserine. The Glutaredoxin domain occupies 2 to 93; the sequence is SGLRVYSTSV…NTLQEFLKLA (92 aa). Residue T9 is glycosylated (O-linked (GalNAc...) threonine).

Belongs to the SH3BGR family. Homodimer. Interacts with MYO1C (via its IQ motifs); the interaction is dependent on calcium and takes place at membrane ruffles. Post-translationally, may be glycosylated.

It is found in the cytoplasm. Its subcellular location is the cytosol. It localises to the cell projection. The protein resides in the ruffle membrane. The protein localises to the nucleus. Functionally, could act as a modulator of glutaredoxin biological activity. May play a role in cytoskeleton organization. In Bos taurus (Bovine), this protein is SH3 domain-binding glutamic acid-rich-like protein 3 (SH3BGRL3).